We begin with the raw amino-acid sequence, 407 residues long: MINVYDILKERGYIKQLTHEEEIRELLGKEKISFYIGFDPTADSLHVGHFLQMMVMAHMQKAGHRPIALVGGGTGMIGDPTGKTDMRKMMTKEQIEYNCNCFKKQLAKIIDFSEDKAIMVNNADWLLNLNYIEFLREIGVHFSVNKMLTAECFKSRLEKGLSFLEFNYMLMQGYDFLELNRKYNCVMELGGDDQWSNILAGVDLIRRKESKSAYGMTFTLLTNSEGKKMGKTESGALWLDPEKTSPYEFYQYWRNVADADVEKCLRLITFLPMDEVRRLSSLEGAEINEAKRVLAFEVTKLIHGEEEAQKAKVAAEALFGGNAKDLGNMPTAYIDKDDLNNPLVDLLAKCEILPSKSEARRLIKQGGLYVNDEKVTDINLVLTEEHVTEDGIMIRRGKKNFNRIVVE.

Residue Tyr35 coordinates L-tyrosine. The 'HIGH' region motif lies at 40-49 (PTADSLHVGH). 2 residues coordinate L-tyrosine: Tyr168 and Gln172. The 'KMSKS' region signature appears at 228–232 (KMGKT). Residue Lys231 participates in ATP binding. The S4 RNA-binding domain maps to 341 to 405 (NPLVDLLAKC…RGKKNFNRIV (65 aa)).

Belongs to the class-I aminoacyl-tRNA synthetase family. TyrS type 1 subfamily. As to quaternary structure, homodimer.

It is found in the cytoplasm. It carries out the reaction tRNA(Tyr) + L-tyrosine + ATP = L-tyrosyl-tRNA(Tyr) + AMP + diphosphate + H(+). In terms of biological role, catalyzes the attachment of tyrosine to tRNA(Tyr) in a two-step reaction: tyrosine is first activated by ATP to form Tyr-AMP and then transferred to the acceptor end of tRNA(Tyr). The chain is Tyrosine--tRNA ligase from Clostridium botulinum (strain 657 / Type Ba4).